The following is a 376-amino-acid chain: MSKGKVLLVLYEGGKHAEEQEKLLGCIENELGIRNFIEEQGYELVTTIDKDPEPTSTVDRELKDAEIVITTPFFPAYISRNRIAEAPNLKLCVTAGVGSDHVDLEAANERKITVTEVTGSNVVSVAEHVMATILVLIRNYNGGHQQAINGEWDIAGVAKNEYDLEDKIISTVGAGRIGYRVLERLVAFNPKKLLYYDYQELPAEAINRLNEASKLFNGRGDIVQRVEKLEDMVAQSDVVTINCPLHKDSRGLFNKKLISHMKDGAYLVNTARGAICVAEDVAEAVKSGKLAGYGGDVWDKQPAPKDHPWRTMDNKDHVGNAMTVHISGTSLHAQKRYAQGVKNILNSYFSKKFDYRPQDIIVQNGSYATRAYGQKK.

Positions 97 and 121 each coordinate substrate. Residues 176-177 (RI), Asp197, 244-248 (PLHKD), Thr270, Asp296, and 325-328 (HISG) contribute to the NAD(+) site.

Belongs to the D-isomer specific 2-hydroxyacid dehydrogenase family. FDH subfamily. Homodimer.

Its subcellular location is the cytoplasm. The enzyme catalyses formate + NAD(+) = CO2 + NADH. In terms of biological role, catalyzes the NAD(+)-dependent oxidation of formate to carbon dioxide. Formate oxidation is the final step in the methanol oxidation pathway in methylotrophic microorganisms. Has a role in the detoxification of exogenous formate in non-methylotrophic organisms. The protein is Formate dehydrogenase 2 (FDH2) of Saccharomyces cerevisiae (strain CEN.PK113-7D) (Baker's yeast).